Consider the following 260-residue polypeptide: Small ribosomal subunit protein uS2 (260 aa).

This sequence belongs to the universal ribosomal protein uS2 family.

The protein is Small ribosomal subunit protein uS2 of Staphylococcus carnosus (strain TM300).